The primary structure comprises 27 residues: MKRISTTITTTITTTITITITTGNGAG.

This sequence belongs to the thr operon leader peptide family.

Functionally, this protein is involved in control of the biosynthesis of threonine. This chain is thr operon leader peptide, found in Escherichia coli O157:H7.